The following is a 259-amino-acid chain: Ribosomal RNA small subunit methyltransferase A (259 aa).

S-adenosyl-L-methionine-binding residues include Asn-13, Leu-15, Gly-40, Glu-61, Asp-85, and Asn-103.

Belongs to the class I-like SAM-binding methyltransferase superfamily. rRNA adenine N(6)-methyltransferase family. RsmA subfamily.

It is found in the cytoplasm. It carries out the reaction adenosine(1518)/adenosine(1519) in 16S rRNA + 4 S-adenosyl-L-methionine = N(6)-dimethyladenosine(1518)/N(6)-dimethyladenosine(1519) in 16S rRNA + 4 S-adenosyl-L-homocysteine + 4 H(+). Specifically dimethylates two adjacent adenosines (A1518 and A1519) in the loop of a conserved hairpin near the 3'-end of 16S rRNA in the 30S particle. May play a critical role in biogenesis of 30S subunits. The polypeptide is Ribosomal RNA small subunit methyltransferase A (Neisseria gonorrhoeae (strain ATCC 700825 / FA 1090)).